Reading from the N-terminus, the 402-residue chain is MTWDTKNQFETTKTSQELPATSQDHISDNKMNSEPSHRLSQFWSSLTRSSSESITAEPVVILGHTYREGDRDREGDSEVQKQVKKRYWMSYRSGFEPIKKHEDGPSPLSFVQSMIFNKNVGNTFANIHSLVDNDNFTTDVGWGCMIRTSQSVLANAIDRAGYEVDVELFADTSSAAFSLHNFVKVASDSPLRVRPGQWFGPSAASLSIKRLCEARNSSTNVPLSVLVCESGDIYDDQIQTFPVLLLLPLRLGIDHVNNVYHSSLLQLLEVPQSAGIAGGKPSSSLYFFGYQGTSLLYLDPHYPQNVSAGVGSYHSSSYQKLDISDMDPSMMAGIVLKNNEDYTDLKRRTTGNKIIHFHEARNYNDYVEVEREDFIDLGQNNRSATAGAEADFDSESSMVIVD.

Residues Met1–Arg38 form a disordered region. Cys144 (nucleophile) is an active-site residue. Residues Asp299 and His301 contribute to the active site.

The protein belongs to the peptidase C54 family.

The protein localises to the cytoplasm. It is found in the nucleus. The protein resides in the preautophagosomal structure. It carries out the reaction [protein]-C-terminal L-amino acid-glycyl-phosphatidylethanolamide + H2O = [protein]-C-terminal L-amino acid-glycine + a 1,2-diacyl-sn-glycero-3-phosphoethanolamine. Functionally, cysteine protease that plays a key role in cytoplasm to vacuole transport (Cvt) and autophagy by mediating both proteolytic activation and delipidation of ATG8. Required for selective autophagic degradation of the nucleus (nucleophagy) as well as for mitophagy which contributes to regulate mitochondrial quantity and quality by eliminating the mitochondria to a basal level to fulfill cellular energy requirements and preventing excess ROS production. The protease activity is required for proteolytic activation of ATG8: cleaves the C-terminal amino acid of ATG8 to reveal a C-terminal glycine. ATG8 ubiquitin-like activity requires the exposure of the glycine at the C-terminus for its conjugation to phosphatidylethanolamine (PE) and its insertion to membranes, which is necessary for autophagy. The ATG8-PE conjugate mediates tethering between adjacent membranes and stimulates membrane hemifusion, leading to expansion of the autophagosomal membrane during autophagy. In addition to the protease activity, also catalyzes deconjugation of PE-conjugated forms of ATG8 during macroautophagy: ATG8 delipidation is required to release the protein from membranes, which facilitates multiple events during macroautophagy, and especially for efficient autophagosome biogenesis, the assembly of ATG9-containing tubulovesicular clusters into phagophores/autophagosomes, and for the disassembly of PAS-associated ATG components. ATG8 delipidation by ATG4 also recycles ATG8-PE generated on inappropriate membranes to maintain a reservoir of unlipidated ATG8 that is required for autophagosome formation at the PAS. In Meyerozyma guilliermondii (strain ATCC 6260 / CBS 566 / DSM 6381 / JCM 1539 / NBRC 10279 / NRRL Y-324) (Yeast), this protein is Probable cysteine protease ATG4 (ATG4).